The primary structure comprises 135 residues: Small ribosomal subunit protein uS12 (135 aa).

A 3-methylthioaspartic acid modification is found at Asp-89. Residues 108 to 135 form a disordered region; it reads NKRTVSRSKYGTKKAKATDKKATDNKKK. The span at 111–122 shows a compositional bias: basic residues; sequence TVSRSKYGTKKA. The segment covering 123-135 has biased composition (basic and acidic residues); sequence KATDKKATDNKKK.

This sequence belongs to the universal ribosomal protein uS12 family. Part of the 30S ribosomal subunit. Contacts proteins S8 and S17. May interact with IF1 in the 30S initiation complex.

Its function is as follows. With S4 and S5 plays an important role in translational accuracy. In terms of biological role, interacts with and stabilizes bases of the 16S rRNA that are involved in tRNA selection in the A site and with the mRNA backbone. Located at the interface of the 30S and 50S subunits, it traverses the body of the 30S subunit contacting proteins on the other side and probably holding the rRNA structure together. The combined cluster of proteins S8, S12 and S17 appears to hold together the shoulder and platform of the 30S subunit. This is Small ribosomal subunit protein uS12 from Helicobacter pylori (strain P12).